The following is a 776-amino-acid chain: Systemic RNA interference defective protein 1 (776 aa).

Positions 1 to 17 (MIRVYLIILMHLVIGLT) are cleaved as a signal peptide. At 18–319 (QNNSTTPSPI…ENQSYAVPTA (302 aa)) the chain is on the extracellular side. Asn-19, Asn-20, Asn-32, Asn-205, Asn-210, Asn-234, Asn-290, and Asn-311 each carry an N-linked (GlcNAc...) asparagine glycan. The segment at 22-312 (TTPSPIITSS…SFEFKKLENQ (291 aa)) is involved in dsRNA-binding. Residues 320–340 (LMMIFLTTPCLLFLPIVINII) traverse the membrane as a helical segment. The Cytoplasmic portion of the chain corresponds to 341-429 (KNSRKLAPSQ…KQDSLSLHGQ (89 aa)). Residues 360–390 (PSEQRDMDLSHDEQQNTSSELENNGEIPAAE) are disordered. Residues 362–373 (EQRDMDLSHDEQ) are compositionally biased toward basic and acidic residues. Residues 430 to 450 (MLQYPVAIILPVLMHTAIEFH) form a helical membrane-spanning segment. Topologically, residues 451-481 (KWTTSTMANRDEMCFHNHACARPLGELRAWN) are extracellular. The chain crosses the membrane as a helical span at residues 482–502 (NIITNIGYTLYGAIFIVLSIC). The Cytoplasmic segment spans residues 503–510 (RRGRHEYS). A helical membrane pass occupies residues 511–531 (HVFGTYECTLLDVTIGVFMVL). At 532 to 543 (QSIASATYHICP) the chain is on the extracellular side. A helical membrane pass occupies residues 544–564 (SDVAFQFDTPCIQVICGLLMV). Residues 565–575 (RQWFVRHESPS) lie on the Cytoplasmic side of the membrane. The chain crosses the membrane as a helical span at residues 576 to 596 (PAYTNILLVGVVSLNFLISAF). Over 597 to 599 (SKT) the chain is Extracellular. Residues 600-620 (SYVRFIIAVIHVIVVGSICLA) traverse the membrane as a helical segment. Over 621–633 (KERSLGSEKLKTR) the chain is Cytoplasmic. The chain crosses the membrane as a helical span at residues 634–654 (FFIMAFSMGNFAAIVMYLTLS). Residues 655–659 (AFHLN) are Extracellular-facing. Residues 660-680 (QIATYCFIINCIMYLMYYGCM) form a helical membrane-spanning segment. Over 681 to 691 (KVLHSERITSK) the chain is Cytoplasmic. The helical transmembrane segment at 692–712 (AKLCGALSLLAWAVAGFFFFQ) threads the bilayer. Over 713–741 (DDTDWTRSAAASRALNKPCLLLGFFGSHD) the chain is Extracellular. A helical membrane pass occupies residues 742 to 762 (LWHIFGALAGLFTFIFVSFVD). Topologically, residues 763 to 776 (DDLINTRKTSINIF) are cytoplasmic.

The protein belongs to the SID1 family. In terms of assembly, may self-associate to form multimers. Expressed in most non-neuronal cells, including body wall muscle cells.

The protein localises to the cell membrane. Its function is as follows. Plays a role in RNA-mediated gene silencing by acting cell-autonomously as a channel for the transport of double-stranded RNA (dsRNA) between cells. Mediates the spread of dsRNA and subsequent silencing of genes in cells distant from the site of dsRNA introduction. Selective for dsRNA. Preferentially binds long dsRNA, from 50 base pairs up to 700. Short 20 base-pair long molecules are not bound. May also bind dsDNA, but with lower affinity. Binding may be sequence-independent. Required for avoidance behavior induced by small RNAs derived from pathogenic bacteria such as P.aeruginosa. This Caenorhabditis elegans protein is Systemic RNA interference defective protein 1.